Reading from the N-terminus, the 193-residue chain is Der GTPase-activating protein YihI (193 aa).

Over residues 1-12 (MSAKQPNRKPTG) the composition is skewed to basic residues. 2 disordered regions span residues 1–91 (MSAK…KLVM) and 143–193 (IIDN…PKKK). Residues 13–26 (KRKESDASALDGRE) show a composition bias toward basic and acidic residues. A compositionally biased stretch (basic residues) spans 27-36 (RKRAAKRKGL). Residues 40–54 (SRQQAEQSSKNNNGK) are compositionally biased toward polar residues. A compositionally biased stretch (acidic residues) spans 145 to 160 (DNDDDEEDDGSFDDAS). Residues 184–193 (PEPKPEPKKK) show a composition bias toward basic and acidic residues.

It belongs to the YihI family. As to quaternary structure, interacts with Der.

In terms of biological role, a GTPase-activating protein (GAP) that modifies Der/EngA GTPase function. May play a role in ribosome biogenesis. This chain is Der GTPase-activating protein YihI, found in Aeromonas salmonicida (strain A449).